The chain runs to 367 residues: Anthranilate phosphoribosyltransferase (367 aa).

Low complexity predominate over residues 1–17; sequence MVLSSEASSAADHSAAA. A disordered region spans residues 1–22; it reads MVLSSEASSAADHSAAAPIPTS. Residues Gly104, 107-108, Thr112, 114-117, 132-140, and Gly144 contribute to the 5-phospho-alpha-D-ribose 1-diphosphate site; these read GD, NLST, and KHGNRAASS. Residue Gly104 participates in anthranilate binding. Ser116 contributes to the Mg(2+) binding site. Asn135 serves as a coordination point for anthranilate. Residue Arg190 participates in anthranilate binding. Mg(2+)-binding residues include Asp248 and Glu249.

Belongs to the anthranilate phosphoribosyltransferase family. In terms of assembly, homodimer. The cofactor is Mg(2+).

It catalyses the reaction N-(5-phospho-beta-D-ribosyl)anthranilate + diphosphate = 5-phospho-alpha-D-ribose 1-diphosphate + anthranilate. The protein operates within amino-acid biosynthesis; L-tryptophan biosynthesis; L-tryptophan from chorismate: step 2/5. Its function is as follows. Catalyzes the transfer of the phosphoribosyl group of 5-phosphorylribose-1-pyrophosphate (PRPP) to anthranilate to yield N-(5'-phosphoribosyl)-anthranilate (PRA). The protein is Anthranilate phosphoribosyltransferase of Mycobacterium ulcerans (strain Agy99).